The primary structure comprises 233 residues: 7-cyano-7-deazaguanine synthase (233 aa).

13–23 contributes to the ATP binding site; sequence LSGGLDSATAM. Zn(2+) contacts are provided by Cys-197, Cys-207, Cys-210, and Cys-213.

Belongs to the QueC family. It depends on Zn(2+) as a cofactor.

It carries out the reaction 7-carboxy-7-deazaguanine + NH4(+) + ATP = 7-cyano-7-deazaguanine + ADP + phosphate + H2O + H(+). It participates in purine metabolism; 7-cyano-7-deazaguanine biosynthesis. Functionally, catalyzes the ATP-dependent conversion of 7-carboxy-7-deazaguanine (CDG) to 7-cyano-7-deazaguanine (preQ(0)). This chain is 7-cyano-7-deazaguanine synthase, found in Desulfatibacillum aliphaticivorans.